Consider the following 138-residue polypeptide: Acidic phospholipase A2 Ts-A6 (138 aa).

The first 16 residues, 1–16 (MRALWIMAVLLLGVEG), serve as a signal peptide directing secretion. 7 disulfides stabilise this stretch: Cys-42–Cys-131, Cys-44–Cys-60, Cys-59–Cys-111, Cys-65–Cys-138, Cys-66–Cys-104, Cys-73–Cys-97, and Cys-91–Cys-102. Tyr-43, Gly-45, and Gly-47 together coordinate Ca(2+). His-63 is a catalytic residue. Residue Asp-64 participates in Ca(2+) binding. The active site involves Asp-105.

It depends on Ca(2+) as a cofactor. As to expression, expressed by the venom gland.

Its subcellular location is the secreted. It carries out the reaction a 1,2-diacyl-sn-glycero-3-phosphocholine + H2O = a 1-acyl-sn-glycero-3-phosphocholine + a fatty acid + H(+). Functionally, snake venom phospholipase A2 (PLA2) that shows a moderate inhibition of ADP-induced human platelet aggregation when tested on platelet rich plasma. Exhibits high hydrolytic activities and prefers the anionic micelles (dPPC with deoxycholate) to the zwitterionic micelles (dPPC with Triton X-100). PLA2 catalyzes the calcium-dependent hydrolysis of the 2-acyl groups in 3-sn-phosphoglycerides. In Trimeresurus stejnegeri (Chinese green tree viper), this protein is Acidic phospholipase A2 Ts-A6.